The following is a 708-amino-acid chain: GID complex associated protein 12 (708 aa).

A compositionally biased stretch (low complexity) spans 381–396; it reads SSRRNSSFSTASSEPR. The disordered stretch occupies residues 381–403; it reads SSRRNSSFSTASSEPRPLSRRRR.

In terms of assembly, interacts with core components of the GID/CTLH ubiquitin ligase complex. GID12 binds both the substrate receptor GID4 and the tip of GID5 in the scaffolding module, sealing GID4 onto the scaffold.

Its function is as follows. Regulator of the GID E3 ligase complex. Modulates both assembly of the substrate receptor GID4 into the GID E3 ligase complex and its activity toward its substrates. GID12-binding remodels the N-degron binding pocket in the GID(SR4) complex, and could limit substrate accessibility of a bulky substrate to a ubiquitynation active site, thereby stabilizing gluconeogenic enzyme substrates. Involved in actin patch formation. This is GID complex associated protein 12 from Saccharomyces cerevisiae (strain ATCC 204508 / S288c) (Baker's yeast).